A 286-amino-acid polypeptide reads, in one-letter code: Mitochondrial dicarboxylate carrier (286 aa).

Solcar repeat units lie at residues 7 to 87 (SRWY…MRDY), 100 to 187 (SKVL…AKQL), and 196 to 279 (DNIF…LRKH). The next 3 helical transmembrane spans lie at 9–29 (WYFGGLASCGAACCTHPLDLL), 62–81 (GLSASLCRQMTYSLTRFAIY), and 102–122 (VLLGGISGLTGGFVGTPADLV). Lysine 158 is modified (N6-acetyllysine). Helical transmembrane passes span 162-181 (GATMASSRGALVTVGQLSCY), 202-222 (FLSSFIAGGCATFLCQPLDVL), and 254-274 (GLVPAGVRLVPHTVLTFMFLE).

Belongs to the mitochondrial carrier (TC 2.A.29) family. As to expression, expressed most strongly in liver, then kidney, and at lower levels in heart and brain.

The protein localises to the mitochondrion inner membrane. The catalysed reaction is (S)-malate(in) + phosphate(out) = (S)-malate(out) + phosphate(in). It carries out the reaction malonate(out) + (S)-malate(in) = malonate(in) + (S)-malate(out). It catalyses the reaction (S)-malate(in) + succinate(out) = (S)-malate(out) + succinate(in). The enzyme catalyses (S)-malate(in) + sulfate(out) = (S)-malate(out) + sulfate(in). The catalysed reaction is malonate(out) + phosphate(in) = malonate(in) + phosphate(out). It carries out the reaction succinate(out) + phosphate(in) = succinate(in) + phosphate(out). It catalyses the reaction sulfate(out) + phosphate(in) = sulfate(in) + phosphate(out). The enzyme catalyses malonate(out) + succinate(in) = malonate(in) + succinate(out). Catalyzes the electroneutral exchange or flux of physiologically important metabolites such as dicarboxylates (malonate, malate, succinate), inorganic sulfur-containing anions, and phosphate, across mitochondrial inner membrane. Plays an important role in gluconeogenesis, fatty acid metabolism, urea synthesis, and sulfur metabolism, particularly in liver, by supplying the substrates for the different metabolic processes. Regulates fatty acid release from adipocytes, and contributes to systemic insulin sensitivity. This Rattus norvegicus (Rat) protein is Mitochondrial dicarboxylate carrier.